The primary structure comprises 191 residues: Chromobox protein homolog 5 (191 aa).

Phosphoserine occurs at positions 11, 12, 13, and 14. The 59-residue stretch at Tyr20–Asn78 folds into the Chromo 1 domain. A Glycyl lysine isopeptide (Lys-Gly) (interchain with G-Cter in SUMO2) cross-link involves residue Lys32. Lys40 carries the post-translational modification N6-acetyllysine. Residues Tyr70–Phe117 form a disordered region. Residues Met73–Lys89 are compositionally biased toward basic and acidic residues. Lys91 is covalently cross-linked (Glycyl lysine isopeptide (Lys-Gly) (interchain with G-Cter in SUMO2)). A phosphoserine mark is found at Ser92, Ser95, and Ser97. Residues Lys102, Lys106, Lys154, and Lys184 each participate in a glycyl lysine isopeptide (Lys-Gly) (interchain with G-Cter in SUMO2) cross-link. In terms of domain architecture, Chromo 2; shadow subtype spans Leu121 to Glu179.

In terms of assembly, homodimer. Interacts with histone H3 methylated at 'Lys-9'. Interacts (via Chromo 2; shadow subtype domain) with the MIS12 complex subunit NSL1; the interaction is direct, involves dimeric CBX5, and occurs during interphase. Interacts with POGZ; POGZ and PXVXL motif-containing proteins such as INCENP and TRIM28 compete for interaction with CBX5. Interacts with LRIF1 (via PxVxL motif). Interacts with INCENP. Interacts with TRIM24. Interacts (via the chromoshadow domain) with ATRX; the interaction is direct. Interacts (via the chromoshadow domain) with CHAF1A; the interaction is direct. Interacts (via the chromoshadow domain) with LBR; the interaction is direct. Interacts (via the chromoshadow domain) with NIPBL; the interaction is direct. Interacts (via the chromoshadow domain) with SP100; the interaction is direct. Interacts (via the chromoshadow domain) with STAM2; the interaction is direct. Interacts (via the chromoshadow domain) with TRIM28; the interaction is direct. Interacts (via the chromoshadow domain) with CBX3; the interaction is direct. Interacts with PRR14 (via N-terminus). Interacts with RRP1B. Interacts with HNRNPU (via C-terminus); this interaction is, at least in part, RNA-dependent. Interacts with ZNF263; recruited to the SIX3 promoter along with other proteins involved in chromatin modification and transcriptional corepression where it contributes to transcriptional repression. Interacts with AURKB during mitosis. Interacts with CHAMP1. Interacts with BAHD1. Interacts with HP1BP3. Interacts with CHD3. Interacts with CHD4. Interacts with SMYD5. Interacts with KMT5B. Interacts with KMT5C. (Microbial infection) Interacts with JC virus agnoprotein; this interaction induces the dissociation of CBX5 from LBR, resulting in destabilization of the nuclear envelope. Post-translationally, phosphorylation of HP1 and LBR may be responsible for some of the alterations in chromatin organization and nuclear structure which occur at various times during the cell cycle. Phosphorylated during interphase and possibly hyper-phosphorylated during mitosis. Ubiquitinated.

The protein localises to the nucleus. It localises to the chromosome. The protein resides in the centromere. In terms of biological role, component of heterochromatin that recognizes and binds histone H3 tails methylated at 'Lys-9' (H3K9me), leading to epigenetic repression. In contrast, it is excluded from chromatin when 'Tyr-41' of histone H3 is phosphorylated (H3Y41ph). May contribute to the association of heterochromatin with the inner nuclear membrane by interactions with the lamin-B receptor (LBR). Involved in the formation of kinetochore through interaction with the MIS12 complex subunit NSL1. Required for the formation of the inner centromere. In Homo sapiens (Human), this protein is Chromobox protein homolog 5 (CBX5).